Consider the following 98-residue polypeptide: Co-chaperonin GroES 4 (98 aa).

This sequence belongs to the GroES chaperonin family. As to quaternary structure, heptamer of 7 subunits arranged in a ring. Interacts with the chaperonin GroEL.

Its subcellular location is the cytoplasm. Together with the chaperonin GroEL, plays an essential role in assisting protein folding. The GroEL-GroES system forms a nano-cage that allows encapsulation of the non-native substrate proteins and provides a physical environment optimized to promote and accelerate protein folding. GroES binds to the apical surface of the GroEL ring, thereby capping the opening of the GroEL channel. The polypeptide is Co-chaperonin GroES 4 (Mesorhizobium japonicum (strain LMG 29417 / CECT 9101 / MAFF 303099) (Mesorhizobium loti (strain MAFF 303099))).